Here is a 301-residue protein sequence, read N- to C-terminus: NAD kinase (301 aa).

The active-site Proton acceptor is Asp-73. Residues 73–74 (DG), 151–152 (ND), Arg-179, Asp-181, 192–197 (TAYALS), Ala-216, and Gln-250 contribute to the NAD(+) site.

The protein belongs to the NAD kinase family. A divalent metal cation is required as a cofactor.

It localises to the cytoplasm. The catalysed reaction is NAD(+) + ATP = ADP + NADP(+) + H(+). Its function is as follows. Involved in the regulation of the intracellular balance of NAD and NADP, and is a key enzyme in the biosynthesis of NADP. Catalyzes specifically the phosphorylation on 2'-hydroxyl of the adenosine moiety of NAD to yield NADP. This chain is NAD kinase, found in Methylibium petroleiphilum (strain ATCC BAA-1232 / LMG 22953 / PM1).